The chain runs to 110 residues: UPF0145 protein (110 aa).

The protein belongs to the UPF0145 family.

The protein is UPF0145 protein of Listeria ivanovii.